The chain runs to 132 residues: Small ribosomal subunit protein uS8 (132 aa).

It belongs to the universal ribosomal protein uS8 family. As to quaternary structure, part of the 30S ribosomal subunit. Contacts proteins S5 and S12.

Its function is as follows. One of the primary rRNA binding proteins, it binds directly to 16S rRNA central domain where it helps coordinate assembly of the platform of the 30S subunit. This is Small ribosomal subunit protein uS8 from Xanthomonas oryzae pv. oryzae (strain MAFF 311018).